The chain runs to 232 residues: Phosphatidylserine decarboxylase proenzyme (232 aa).

Residue Ser190 is the Schiff-base intermediate with substrate; via pyruvic acid of the active site. Ser190 is modified (pyruvic acid (Ser); by autocatalysis).

This sequence belongs to the phosphatidylserine decarboxylase family. PSD-A subfamily. In terms of assembly, heterodimer of a large membrane-associated beta subunit and a small pyruvoyl-containing alpha subunit. It depends on pyruvate as a cofactor. Is synthesized initially as an inactive proenzyme. Formation of the active enzyme involves a self-maturation process in which the active site pyruvoyl group is generated from an internal serine residue via an autocatalytic post-translational modification. Two non-identical subunits are generated from the proenzyme in this reaction, and the pyruvate is formed at the N-terminus of the alpha chain, which is derived from the carboxyl end of the proenzyme. The post-translation cleavage follows an unusual pathway, termed non-hydrolytic serinolysis, in which the side chain hydroxyl group of the serine supplies its oxygen atom to form the C-terminus of the beta chain, while the remainder of the serine residue undergoes an oxidative deamination to produce ammonia and the pyruvoyl prosthetic group on the alpha chain.

The protein localises to the cell membrane. The catalysed reaction is a 1,2-diacyl-sn-glycero-3-phospho-L-serine + H(+) = a 1,2-diacyl-sn-glycero-3-phosphoethanolamine + CO2. Its pathway is phospholipid metabolism; phosphatidylethanolamine biosynthesis; phosphatidylethanolamine from CDP-diacylglycerol: step 2/2. Catalyzes the formation of phosphatidylethanolamine (PtdEtn) from phosphatidylserine (PtdSer). The protein is Phosphatidylserine decarboxylase proenzyme of Bartonella bacilliformis (strain ATCC 35685 / KC583 / Herrer 020/F12,63).